A 20-amino-acid chain; its full sequence is Collagenolytic protease 36 kDa A (20 aa).

In terms of domain architecture, Peptidase S1 spans 1-20; sequence IVGGTEVTPGEIPYQLSLQD. The disordered stretch occupies residues 1–20; it reads IVGGTEVTPGEIPYQLSLQD.

It belongs to the peptidase S1 family.

The catalysed reaction is Hydrolysis of proteins, with broad specificity for peptide bonds. Native collagen is cleaved about 75% of the length of the molecule from the N-terminus. Low activity on small molecule substrates of both trypsin and chymotrypsin.. Its function is as follows. This enzyme is a serine protease capable of degrading the native triple helix of collagen. The sequence is that of Collagenolytic protease 36 kDa A from Paralithodes camtschaticus (Red king crab).